A 296-amino-acid polypeptide reads, in one-letter code: Hca operon transcriptional activator HcaR (296 aa).

The HTH lysR-type domain maps to 1-58 (MELRHLRYFVAVAQALNFTRAAEKLHTSQPSLSSQIRDLENCVGVPLLVRDKRKVALT). The segment at residues 18–38 (FTRAAEKLHTSQPSLSSQIRD) is a DNA-binding region (H-T-H motif).

The protein belongs to the LysR transcriptional regulatory family.

Transcriptional activator of the hca operon for 3-phenylpropionic acid catabolism. This chain is Hca operon transcriptional activator HcaR (hcaR), found in Escherichia coli (strain K12).